We begin with the raw amino-acid sequence, 101 residues long: uncharacterized protein (101 aa).

A run of 3 helical transmembrane segments spans residues 20–40 (KHFI…LLGL), 59–79 (GVIA…MYIA), and 81–101 (SEMW…ALFF).

The protein localises to the endoplasmic reticulum. It localises to the membrane. This is an uncharacterized protein from Saccharomyces cerevisiae (strain ATCC 204508 / S288c) (Baker's yeast).